The following is a 251-amino-acid chain: MLLIPAIDLKDGQCVRLKQGDMDQATIFSEDPAAMARKWVDLGARRLHLVDLNGAFAGKPKNLEAIEAILGEVGDEIPVQLGGGIRSLETIEKYLDAGLSYVIIGTAAVKDPGFLQDACSAFAGNIIVGLDAKDGKVATDGWSKLTGHEVIDLARKFEDYGVESIVYTDIGRDGMLQGINIEATVKLAQAVGIPVIASGGLSNIVDIEKLCEVEDEGIEGVICGRAIYSGDLDFAAAQKRADELNGELDDA.

The active-site Proton acceptor is the Asp-8. The active-site Proton donor is the Asp-131.

This sequence belongs to the HisA/HisF family.

It localises to the cytoplasm. It carries out the reaction 1-(5-phospho-beta-D-ribosyl)-5-[(5-phospho-beta-D-ribosylamino)methylideneamino]imidazole-4-carboxamide = 5-[(5-phospho-1-deoxy-D-ribulos-1-ylimino)methylamino]-1-(5-phospho-beta-D-ribosyl)imidazole-4-carboxamide. It functions in the pathway amino-acid biosynthesis; L-histidine biosynthesis; L-histidine from 5-phospho-alpha-D-ribose 1-diphosphate: step 4/9. This is 1-(5-phosphoribosyl)-5-[(5-phosphoribosylamino)methylideneamino] imidazole-4-carboxamide isomerase from Burkholderia pseudomallei (strain 1710b).